A 224-amino-acid polypeptide reads, in one-letter code: Cytidylate kinase (224 aa).

11-19 contacts ATP; that stretch reads GPAGAGKST.

This sequence belongs to the cytidylate kinase family. Type 1 subfamily.

Its subcellular location is the cytoplasm. It catalyses the reaction CMP + ATP = CDP + ADP. The catalysed reaction is dCMP + ATP = dCDP + ADP. This is Cytidylate kinase from Lysinibacillus sphaericus (strain C3-41).